We begin with the raw amino-acid sequence, 203 residues long: FMN-dependent NADH:quinone oxidoreductase (203 aa).

Residues S9, 15–17 (SVS), and 138–141 (SRGG) contribute to the FMN site.

This sequence belongs to the azoreductase type 1 family. As to quaternary structure, homodimer. FMN is required as a cofactor.

It carries out the reaction 2 a quinone + NADH + H(+) = 2 a 1,4-benzosemiquinone + NAD(+). The catalysed reaction is N,N-dimethyl-1,4-phenylenediamine + anthranilate + 2 NAD(+) = 2-(4-dimethylaminophenyl)diazenylbenzoate + 2 NADH + 2 H(+). Its function is as follows. Quinone reductase that provides resistance to thiol-specific stress caused by electrophilic quinones. In terms of biological role, also exhibits azoreductase activity. Catalyzes the reductive cleavage of the azo bond in aromatic azo compounds to the corresponding amines. The chain is FMN-dependent NADH:quinone oxidoreductase from Methylorubrum extorquens (strain PA1) (Methylobacterium extorquens).